The primary structure comprises 256 residues: Enkurin (256 aa).

Positions Pro83–Pro89 match the SH3-binding motif. In terms of domain architecture, Enkurin spans Lys160–Ile252. Positions Lys160–Asn255 are interaction with TRPC proteins. The IQ domain occupies Ile176–Arg187.

In terms of assembly, microtubule inner protein component of sperm flagellar doublet microtubules. Binds calmodulin via its IQ domain. Interacts with TRPC1, TRPC2, TRPC5, but not TRPC3. Interacts with CFAP45. In terms of tissue distribution, expressed in airway epithelial cells.

The protein localises to the cytoplasm. It localises to the cytoskeleton. It is found in the cilium axoneme. The protein resides in the flagellum axoneme. In terms of biological role, adapter that functions to localize a calcium-sensitive signal transduction machinery in sperm to a calcium-permeable ion channel. Microtubule inner protein (MIP) part of the dynein-decorated doublet microtubules (DMTs) in cilia axoneme, which is required for motile cilia beating. This is Enkurin from Homo sapiens (Human).